Reading from the N-terminus, the 455-residue chain is Probable glycine dehydrogenase (decarboxylating) subunit 1 (455 aa).

It belongs to the GcvP family. N-terminal subunit subfamily. In terms of assembly, the glycine cleavage system is composed of four proteins: P, T, L and H. In this organism, the P 'protein' is a heterodimer of two subunits.

It catalyses the reaction N(6)-[(R)-lipoyl]-L-lysyl-[glycine-cleavage complex H protein] + glycine + H(+) = N(6)-[(R)-S(8)-aminomethyldihydrolipoyl]-L-lysyl-[glycine-cleavage complex H protein] + CO2. In terms of biological role, the glycine cleavage system catalyzes the degradation of glycine. The P protein binds the alpha-amino group of glycine through its pyridoxal phosphate cofactor; CO(2) is released and the remaining methylamine moiety is then transferred to the lipoamide cofactor of the H protein. The polypeptide is Probable glycine dehydrogenase (decarboxylating) subunit 1 (Francisella philomiragia subsp. philomiragia (strain ATCC 25017 / CCUG 19701 / FSC 153 / O#319-036)).